Here is a 337-residue protein sequence, read N- to C-terminus: Large ribosomal subunit protein uL3 (337 aa).

Residues 1–29 are disordered; that stretch reads MARHHQPRKGSVAFSPRKRAARETPRVKS.

It belongs to the universal ribosomal protein uL3 family. As to quaternary structure, part of the 50S ribosomal subunit. Forms a cluster with proteins L14 and L24e.

Its function is as follows. One of the primary rRNA binding proteins, it binds directly near the 3'-end of the 23S rRNA, where it nucleates assembly of the 50S subunit. In Methanothermobacter thermautotrophicus (strain ATCC 29096 / DSM 1053 / JCM 10044 / NBRC 100330 / Delta H) (Methanobacterium thermoautotrophicum), this protein is Large ribosomal subunit protein uL3.